Consider the following 247-residue polypeptide: ATP synthase subunit a, chloroplastic (247 aa).

5 consecutive transmembrane segments (helical) span residues 38 to 58 (QVLI…AIAV), 95 to 115 (VPFI…GALL), 134 to 154 (INTT…AGLT), 199 to 219 (LVVV…VMFL), and 220 to 240 (GLFT…AYIG).

This sequence belongs to the ATPase A chain family. In terms of assembly, F-type ATPases have 2 components, CF(1) - the catalytic core - and CF(0) - the membrane proton channel. CF(1) has five subunits: alpha(3), beta(3), gamma(1), delta(1), epsilon(1). CF(0) has four main subunits: a, b, b' and c.

It is found in the plastid. It localises to the chloroplast thylakoid membrane. Key component of the proton channel; it plays a direct role in the translocation of protons across the membrane. This chain is ATP synthase subunit a, chloroplastic, found in Illicium oligandrum (Star anise).